The primary structure comprises 600 residues: Probable translation initiation factor IF-2 (600 aa).

A tr-type G domain is found at 10–227 (LRQPIVVVLG…LLAGLTQRYL (218 aa)). Residues 19–26 (GHVDHGKT) are G1. Residue 19 to 26 (GHVDHGKT) coordinates GTP. Residues 44–48 (EMTQE) form a G2 region. The segment at 83-86 (DTPG) is G3. GTP-binding positions include 83-87 (DTPGH) and 137-140 (NKID). Positions 137 to 140 (NKID) are G4. The G5 stretch occupies residues 205 to 207 (SAK).

Belongs to the TRAFAC class translation factor GTPase superfamily. Classic translation factor GTPase family. IF-2 subfamily.

Functionally, function in general translation initiation by promoting the binding of the formylmethionine-tRNA to ribosomes. Seems to function along with eIF-2. This is Probable translation initiation factor IF-2 from Saccharolobus solfataricus (strain ATCC 35092 / DSM 1617 / JCM 11322 / P2) (Sulfolobus solfataricus).